We begin with the raw amino-acid sequence, 151 residues long: Epigen (151 aa).

The signal sequence occupies residues 1–18; that stretch reads MAFGMLIYILLKAMGALS. Over 19–108 the chain is Extracellular; it reads EEAALTASSL…NSYAHNSYER (90 aa). The N-linked (GlcNAc...) asparagine glycan is linked to asparagine 39. Residues 54-94 enclose the EGF-like domain; it reads LMQTCLEEHHSYCINGLCAFHSELRKPICKCLAGYNGERCE. Disulfide bonds link cysteine 58–cysteine 71, cysteine 66–cysteine 82, and cysteine 84–cysteine 93. A helical membrane pass occupies residues 109–129; it reads YIAVGIGIGILTSGILAIIYC. The Cytoplasmic segment spans residues 130 to 151; the sequence is YVRKRCRKLKSPYKVCMGETAL.

The protein localises to the membrane. Its function is as follows. Promotes the growth of epithelial cells. This chain is Epigen (EPGN), found in Gallus gallus (Chicken).